Reading from the N-terminus, the 203-residue chain is Large ribosomal subunit protein bL25 (203 aa).

This sequence belongs to the bacterial ribosomal protein bL25 family. CTC subfamily. Part of the 50S ribosomal subunit; part of the 5S rRNA/L5/L18/L25 subcomplex. Contacts the 5S rRNA. Binds to the 5S rRNA independently of L5 and L18.

In terms of biological role, this is one of the proteins that binds to the 5S RNA in the ribosome where it forms part of the central protuberance. In Xanthobacter autotrophicus (strain ATCC BAA-1158 / Py2), this protein is Large ribosomal subunit protein bL25.